Consider the following 1170-residue polypeptide: DNA excision repair protein ERCC-5 (1170 aa).

Residues 1–78 (MGVQGLWKLL…RIRPIFVFDG (78 aa)) are N-domain. Lys8 is subject to N6-acetyllysine. Asp30 contributes to the Mg(2+) binding site. A DNA-binding; may bind to the undamaged single-strand DNA of the DNA repair bubble region spans residues 31-67 (ISIWLNQALKGVRDSHGNVIENAHLLTLFHRLCKLLF). Residue Asp77 participates in Mg(2+) binding. Residues 79 to 784 (DAPLLKKQTL…LRLFGVPYIQ (706 aa)) are spacer region. 3 disordered regions span residues 304 to 479 (DSES…RCDT), 520 to 587 (HVSG…PKAC), and 600 to 701 (LENA…ECLL). Over residues 306–323 (ESLPSSSNVHSVSSNLKS) the composition is skewed to low complexity. Basic and acidic residues-rich tracts occupy residues 324 to 336 (SPHE…REPE) and 363 to 373 (SREGRQSKERN). Phosphoserine is present on Ser384. Positions 455 to 474 (TSGSSANGQTDSAHSFTTAS) are enriched in polar residues. Over residues 539–551 (THSDQGIDIHPED) the composition is skewed to basic and acidic residues. Residues 659–676 (SVVSNSELQTESSEASTH) are compositionally biased toward polar residues. The span at 677–698 (LSEKDAEEPRETLEEGTSRDTE) shows a compositional bias: basic and acidic residues. Phosphoserine is present on residues Ser704 and Ser705. Residues 785 to 880 (APMEAEAQCA…VTAMEILNEF (96 aa)) are I-domain. Mg(2+)-binding residues include Glu788, Glu790, Asp809, and Asp811. The tract at residues 819–835 (HVYKNFFNKNKFVEYYQ) is DNA-binding; may bind to the undamaged single-strand DNA of the DNA repair bubble. The tract at residues 847 to 879 (RNKLINLAYLLGSDYTEGIPTVGCVTAMEILNE) is DNA-binding; H2TH (helix-2turn-helix) motif which binds double-stranded DNA. Residue Asp860 coordinates Mg(2+). Residues 911–917 (TKVKKKL) are DNA-binding; may bind double-stranded DNA. The interaction with PCNA stretch occupies residues 980–1008 (LKHLNAHQTQLRIDSFFRLAQQEKQDAKL). Positions 1010–1170 (KSHRLNRAVT…KSMKRRKKKT (161 aa)) are interaction with ERCC6/CSB. Positions 1033 to 1146 (LTKVTEALDD…DDEDKAKTVL (114 aa)) are disordered. The span at 1041-1060 (DDAKGKTQKRELPYKKETSV) shows a compositional bias: basic and acidic residues. A Nuclear localization signal 1 motif is present at residues 1049 to 1065 (KRELPYKKETSVPKRRR). Residues 1094 to 1110 (SVMSARQRSAAESSKIS) show a composition bias toward polar residues. The Nuclear localization signal 2 signature appears at 1153 to 1170 (FGKKKLKLKSMKRRKKKT).

The protein belongs to the XPG/RAD2 endonuclease family. XPG subfamily. As to quaternary structure, monomer. Homodimer. Component of the homologous recombination repair (HR) complex composed of ERCC5/XPG, BRCA2, PALB2, DSS1 and RAD51. Within the complex, interacts with BRCA2 and PALB2. Interacts with RNA polymerase II. Interacts (via C-terminus) with ERCC6/CSB; the interaction stimulates ERCC6/CSB binding to the DNA repair bubble and ERCC6/CSB ATPase activity. May form a complex composed of RNA polymerase II, ERCC6/CSB and ERCC5/XPG which associates with the DNA repair bubble during transcription-coupled nucleotide excision repair. Interacts with BRCA1; the interaction promotes the release of BRCA1 from DNA. Interacts with PCNA. Interacts with NTHL1; the interaction stimulates NTHL1 activity and NTHL1 binding to its DNA substrate. It depends on Mg(2+) as a cofactor.

It is found in the nucleus. The protein resides in the chromosome. Functionally, single-stranded structure-specific DNA endonuclease involved in DNA excision repair. Makes the 3'incision in DNA nucleotide excision repair (NER). Binds and bends DNA repair bubble substrate and breaks base stacking at the single-strand/double-strand DNA junction of the DNA bubble. Plays a role in base excision repair (BER) by promoting the binding of DNA glycosylase NTHL1 to its substrate and increasing NTHL1 catalytic activity that removes oxidized pyrimidines from DNA. Involved in transcription-coupled nucleotide excision repair (TCR) which allows RNA polymerase II-blocking lesions to be rapidly removed from the transcribed strand of active genes. Functions during the initial step of TCR in cooperation with ERCC6/CSB to recognized stalled RNA polymerase II. Also, stimulates ERCC6/CSB binding to the DNA repair bubble and ERCC6/CSB ATPase activity. Required for DNA replication fork maintenance and preservation of genomic stability. Involved in homologous recombination repair (HRR) induced by DNA replication stress by recruiting RAD51, BRCA2, and PALB2 to the damaged DNA site. During HRR, binds to the replication fork with high specificity and stabilizes it. Also, acts upstream of HRR, to promote the release of BRCA1 from DNA. This chain is DNA excision repair protein ERCC-5 (Ercc5), found in Mus musculus (Mouse).